The primary structure comprises 397 residues: Probable protein phosphatase 2C 74 (397 aa).

Residues Gly133–Leu391 enclose the PPM-type phosphatase domain. Asp170, Gly171, Asp343, and Asp382 together coordinate Mn(2+).

This sequence belongs to the PP2C family. It depends on Mg(2+) as a cofactor. The cofactor is Mn(2+).

It catalyses the reaction O-phospho-L-seryl-[protein] + H2O = L-seryl-[protein] + phosphate. The catalysed reaction is O-phospho-L-threonyl-[protein] + H2O = L-threonyl-[protein] + phosphate. The sequence is that of Probable protein phosphatase 2C 74 from Oryza sativa subsp. japonica (Rice).